We begin with the raw amino-acid sequence, 362 residues long: Carbamoyl phosphate synthase pyrimidine-specific small chain (362 aa).

The CPSase stretch occupies residues 1–168 (MKRQLILEDG…TRDPYHVPGP (168 aa)). L-glutamine contacts are provided by Ser-45, Gly-219, and Gly-221. The 188-residue stretch at 171 to 358 (RVVLVDYGMK…IKLMESNKHR (188 aa)) folds into the Glutamine amidotransferase type-1 domain. Cys-246 acts as the Nucleophile in catalysis. L-glutamine is bound by residues Leu-247, Gln-250, Asn-288, Gly-290, and Tyr-291. Active-site residues include His-331 and Glu-333.

Belongs to the CarA family. As to quaternary structure, composed of two chains; the small (or glutamine) chain promotes the hydrolysis of glutamine to ammonia, which is used by the large (or ammonia) chain to synthesize carbamoyl phosphate. Tetramer of heterodimers (alpha,beta)4.

It carries out the reaction hydrogencarbonate + L-glutamine + 2 ATP + H2O = carbamoyl phosphate + L-glutamate + 2 ADP + phosphate + 2 H(+). The enzyme catalyses L-glutamine + H2O = L-glutamate + NH4(+). It participates in pyrimidine metabolism; UMP biosynthesis via de novo pathway; (S)-dihydroorotate from bicarbonate: step 1/3. Functionally, small subunit of the glutamine-dependent carbamoyl phosphate synthetase (CPSase). CPSase catalyzes the formation of carbamoyl phosphate from the ammonia moiety of glutamine, carbonate, and phosphate donated by ATP, constituting the first step of the biosynthetic pathway leading to pyrimidine nucleotides. The small subunit (glutamine amidotransferase) binds and cleaves glutamine to supply the large subunit with the substrate ammonia. The chain is Carbamoyl phosphate synthase pyrimidine-specific small chain from Halalkalibacterium halodurans (strain ATCC BAA-125 / DSM 18197 / FERM 7344 / JCM 9153 / C-125) (Bacillus halodurans).